Reading from the N-terminus, the 203-residue chain is Putative phosphoserine phosphatase 2 (203 aa).

The Tele-phosphohistidine intermediate role is filled by H9. H149 is a catalytic residue.

Belongs to the histidine phosphatase superfamily. Metal-independent phosphoserine phosphatase family. In terms of assembly, heterodimer with PspA. The PspB subunit appears to have no or considerably lower PSP activity compared with that of PspA.

It catalyses the reaction O-phospho-L-serine + H2O = L-serine + phosphate. The catalysed reaction is O-phospho-D-serine + H2O = D-serine + phosphate. The protein operates within amino-acid biosynthesis; L-serine biosynthesis; L-serine from 3-phospho-D-glycerate: step 3/3. Its activity is regulated as follows. Activity is not inhibited by EDTA in vitro, nor enhanced by the addition of Mg(2+). Functionally, part of a complex that catalyzes the dephosphorylation of L-phosphoserine to serine and inorganic phosphate. Is poorly or not active toward D-phosphoserine, DL-phosphothreonine, 3-phosphoglycerate, para-nitrophenylphosphate, and fructose-6-phosphate. Does not display phosphoglycerate mutase activity. The protein is Putative phosphoserine phosphatase 2 (pspB) of Hydrogenobacter thermophilus (strain DSM 6534 / IAM 12695 / TK-6).